The following is a 94-amino-acid chain: MSRSKKKGPYVHPKLLKKIKEMNEKGEKKPIKTWSRASMVVPEMIGHTIAVYNGMKHIPVYITENMIGHRLGEFSPTRRFGGHADKKSKKGQVK.

The tract at residues 73–94 is disordered; sequence EFSPTRRFGGHADKKSKKGQVK.

The protein belongs to the universal ribosomal protein uS19 family.

Its function is as follows. Protein S19 forms a complex with S13 that binds strongly to the 16S ribosomal RNA. This Kosmotoga olearia (strain ATCC BAA-1733 / DSM 21960 / TBF 19.5.1) protein is Small ribosomal subunit protein uS19.